We begin with the raw amino-acid sequence, 594 residues long: MASLPVNKIIPSSTTLLSSSNNNRRRNNSSIRCQKAVSPAAETAAVSPSVDAARLEPRVEERDGFWVLKEEFRSGINPAEKVKIEKDPMKLFIEDGISDLATLSMEEVDKSKHNKDDIDVRLKWLGLFHRRKHHYGRFMMRLKLPNGVTTSEQTRYLASVIKKYGKDGCADVTTRQNWQIRGVVLPDVPEIIKGLESVGLTSLQSGMDNVRNPVGNPLAGIDPHEIVDTRPFTNLISQFVTANSRGNLSITNLPRKWNPCVIGSHDLYEHPHINDLAYMPATKNGKFGFNLLVGGFFSIKRCEEAIPLDAWVSAEDVVPVCKAMLEAFRDLGFRGNRQKCRMMWLIDELGMEAFRGEVEKRMPEQVLERASSEELVQKDWERREYLGVHPQKQQGLSFVGLHIPVGRLQADEMEELARIADVYGSGELRLTVEQNIIIPNVENSKIDSLLNEPLLKERYSPEPPILMKGLVACTGSQFCGQAIIETKARALKVTEEVQRLVSVTRPVRMHWTGCPNSCGQVQVADIGFMGCMTRDENGKPCEGADVFVGGRIGSDSHLGDIYKKAVPCKDLVPVVAEILINQFGAVPREREEAE.

The transit peptide at 1-32 directs the protein to the chloroplast; that stretch reads MASLPVNKIIPSSTTLLSSSNNNRRRNNSSIR. Positions 13-22 are enriched in low complexity; sequence STTLLSSSNN. The interval 13-36 is disordered; the sequence is STTLLSSSNNNRRRNNSSIRCQKA. [4Fe-4S] cluster contacts are provided by C473, C479, C514, and C518. Residue C518 coordinates siroheme.

It belongs to the nitrite and sulfite reductase 4Fe-4S domain family. Monomer. Siroheme is required as a cofactor. The cofactor is [4Fe-4S] cluster.

Its subcellular location is the plastid. The protein localises to the chloroplast. It carries out the reaction 6 oxidized [2Fe-2S]-[ferredoxin] + NH4(+) + 2 H2O = nitrite + 6 reduced [2Fe-2S]-[ferredoxin] + 8 H(+). It participates in nitrogen metabolism; nitrate reduction (assimilation). This is Ferredoxin--nitrite reductase, chloroplastic (NIR) from Spinacia oleracea (Spinach).